The primary structure comprises 329 residues: GTPase Obg (329 aa).

The 159-residue stretch at 1-159 folds into the Obg domain; sequence MQFIDEAKIF…MWVWLHLKLL (159 aa). An OBG-type G domain is found at 160-327; it reads SDVGLVGLPN…LLANILSELQ (168 aa). GTP-binding positions include 166–173, 191–195, 212–215, 279–282, and 308–310; these read GLPNAGKS, FTTLT, DIPG, TKTD, and SSY. Mg(2+) contacts are provided by Ser-173 and Thr-193.

It belongs to the TRAFAC class OBG-HflX-like GTPase superfamily. OBG GTPase family. In terms of assembly, monomer. Mg(2+) serves as cofactor.

It is found in the cytoplasm. Functionally, an essential GTPase which binds GTP, GDP and possibly (p)ppGpp with moderate affinity, with high nucleotide exchange rates and a fairly low GTP hydrolysis rate. Plays a role in control of the cell cycle, stress response, ribosome biogenesis and in those bacteria that undergo differentiation, in morphogenesis control. The sequence is that of GTPase Obg from Orientia tsutsugamushi (strain Boryong) (Rickettsia tsutsugamushi).